The following is a 425-amino-acid chain: Orexin/Hypocretin receptor type 1 (425 aa).

The disordered stretch occupies residues 1-24 (MEPSATPGAQMGVPPGSREPSPVP). Residues 1–46 (MEPSATPGAQMGVPPGSREPSPVPPDYEDEFLRYLWRDYLYPKQYE) lie on the Extracellular side of the membrane. The segment at 26–41 (DYEDEFLRYLWRDYLY) is required for response to orexin-A. A helical membrane pass occupies residues 47 to 67 (WVLIAAYVAVFVVALVGNTLV). The Cytoplasmic portion of the chain corresponds to 68-82 (CLAVWRNHHMRTVTN). The helical transmembrane segment at 83–105 (YFIVNLSLADVLVTAICLPASLL) threads the bilayer. The Extracellular portion of the chain corresponds to 106 to 119 (VDITESWLFGHALC). A disulfide bridge links Cys119 with Cys202. A helical membrane pass occupies residues 120 to 140 (KVIPYLQAVSVSVAVLTLSFI). Residues 141 to 160 (ALDRWYAICHPLLFKSTARR) lie on the Cytoplasmic side of the membrane. A helical membrane pass occupies residues 161 to 182 (ARGSILGIWAVSLAIMVPQAAV). Over 183–213 (MECSSVLPELANRTRLFSVCDERWADDLYPK) the chain is Extracellular. An N-linked (GlcNAc...) asparagine glycan is attached at Asn194. A helical transmembrane segment spans residues 214-235 (IYHSCFFIVTYLAPLGLMAMAY). The Cytoplasmic segment spans residues 236-298 (FQIFRKLWGR…QMRARRKTAK (63 aa)). Residues 299–321 (MLMVVLLVFALCYLPISVLNVLK) traverse the membrane as a helical segment. Residue Asn318 coordinates suvorexant. Residues 322 to 336 (RVFGMFRQASDREAV) are Extracellular-facing. The chain crosses the membrane as a helical span at residues 337–360 (YACFTFSHWLVYANSAANPIIYNF). Topologically, residues 361–425 (LSGKFREQFK…VLTSVTTVLP (65 aa)) are cytoplasmic.

It belongs to the G-protein coupled receptor 1 family.

The protein resides in the cell membrane. In terms of biological role, moderately selective excitatory receptor for orexin-A and, with a lower affinity, for orexin-B neuropeptide. Triggers an increase in cytoplasmic Ca(2+) levels in response to orexin-A binding. This chain is Orexin/Hypocretin receptor type 1, found in Homo sapiens (Human).